The chain runs to 113 residues: Endoribonuclease SymE (113 aa).

The SpoVT-AbrB domain maps to 29-74 (SRYPDYSRIPAITLKGQWLEAAGFATGTAVDVKVMEGCIVLTAQPP).

This sequence belongs to the SymE family.

The protein resides in the cytoplasm. In terms of biological role, involved in the degradation and recycling of damaged RNA. It is itself a target for degradation by the ATP-dependent protease Lon. The polypeptide is Endoribonuclease SymE (Escherichia coli O6:K15:H31 (strain 536 / UPEC)).